A 68-amino-acid polypeptide reads, in one-letter code: Alpha-conotoxin Lp1.4 (68 aa).

An N-terminal signal peptide occupies residues methionine 1 to serine 21. The propeptide occupies phenylalanine 22–arginine 48. Disulfide bonds link cysteine 50–cysteine 56 and cysteine 51–cysteine 64. Residues serine 52–proline 54 are ser-Xaa-Pro motif, crucial for potent interaction with nAChR. Aspartate 65 is subject to Aspartic acid 1-amide.

Belongs to the conotoxin A superfamily. Expressed by the venom duct.

It localises to the secreted. In terms of biological role, alpha-conotoxins act on postsynaptic membranes, they bind to the nicotinic acetylcholine receptors (nAChR) and thus inhibit them. This toxin inhibits mouse muscle alpha-1-beta-1-gamma-delta (CHRNA1-CHRNB1-CHRNG-CHRND), and weakly rat neuronal alpha-6/alpha-3-beta-2 (CHRNA6/CHRNA3-CHRNB2). This is Alpha-conotoxin Lp1.4 from Conus leopardus (Leopard cone).